Reading from the N-terminus, the 285-residue chain is Probable endonuclease 4 (285 aa).

Zn(2+) contacts are provided by His-69, His-109, Glu-145, Asp-179, His-182, His-216, Asp-229, His-231, and Glu-261.

It belongs to the AP endonuclease 2 family. The cofactor is Zn(2+).

The catalysed reaction is Endonucleolytic cleavage to 5'-phosphooligonucleotide end-products.. Its function is as follows. Endonuclease IV plays a role in DNA repair. It cleaves phosphodiester bonds at apurinic or apyrimidinic (AP) sites, generating a 3'-hydroxyl group and a 5'-terminal sugar phosphate. The sequence is that of Probable endonuclease 4 from Salmonella arizonae (strain ATCC BAA-731 / CDC346-86 / RSK2980).